Consider the following 493-residue polypeptide: Transcription termination factor MTERF5, chloroplastic (493 aa).

The transit peptide at 1-43 (MQSLSQLGPSEIFLVARREKPSTRAQLWFTGRLSFRQETNGIR) directs the protein to the chloroplast.

This sequence belongs to the mTERF family. As to quaternary structure, interacts with pTAC6. Expressed in roots, rosette leaves, cauline leaves, stems, flower buds and open flowers.

The protein resides in the plastid. The protein localises to the chloroplast. In terms of biological role, transcription termination factor required for processing and steady-state levels of plastid transcripts. Involved also in chloroplast transcriptional pausing, a general feature of chloroplast genes. Specifically and positively regulates the transcription of chloroplast psbEFLJ encoding for photosystem II (PSII) core subunits psbE, psbF, psbL and psbJ; causes the plastid-encoded RNA polymerase (PEP) complex to pause at psbEFLJ by binding to the +30 to +51 region of double-stranded DNA, and recruits additional pTAC6 to the transcriptionally paused region of psbEFLJ. May play a role in response to abiotic stresses. In Arabidopsis thaliana (Mouse-ear cress), this protein is Transcription termination factor MTERF5, chloroplastic.